Consider the following 343-residue polypeptide: Thiamine-phosphate synthase (343 aa).

The unknown stretch occupies residues 1–123 (MQQASPTAIA…GACCKQLRYR (123 aa)). Residues 124-343 (VYALESGLLG…LLTQLSRINP (220 aa)) form a thiamine-phosphate synthase region. Residues 171-175 (QYRDK) and N203 contribute to the 4-amino-2-methyl-5-(diphosphooxymethyl)pyrimidine site. Positions 204 and 223 each coordinate Mg(2+). Position 242 (S242) interacts with 4-amino-2-methyl-5-(diphosphooxymethyl)pyrimidine. Residue 268 to 270 (TPT) coordinates 2-[(2R,5Z)-2-carboxy-4-methylthiazol-5(2H)-ylidene]ethyl phosphate. K271 provides a ligand contact to 4-amino-2-methyl-5-(diphosphooxymethyl)pyrimidine. G298 lines the 2-[(2R,5Z)-2-carboxy-4-methylthiazol-5(2H)-ylidene]ethyl phosphate pocket.

This sequence belongs to the thiamine-phosphate synthase family. The cofactor is Mg(2+).

It catalyses the reaction 2-[(2R,5Z)-2-carboxy-4-methylthiazol-5(2H)-ylidene]ethyl phosphate + 4-amino-2-methyl-5-(diphosphooxymethyl)pyrimidine + 2 H(+) = thiamine phosphate + CO2 + diphosphate. The enzyme catalyses 2-(2-carboxy-4-methylthiazol-5-yl)ethyl phosphate + 4-amino-2-methyl-5-(diphosphooxymethyl)pyrimidine + 2 H(+) = thiamine phosphate + CO2 + diphosphate. The catalysed reaction is 4-methyl-5-(2-phosphooxyethyl)-thiazole + 4-amino-2-methyl-5-(diphosphooxymethyl)pyrimidine + H(+) = thiamine phosphate + diphosphate. The protein operates within cofactor biosynthesis; thiamine diphosphate biosynthesis; thiamine phosphate from 4-amino-2-methyl-5-diphosphomethylpyrimidine and 4-methyl-5-(2-phosphoethyl)-thiazole: step 1/1. Functionally, condenses 4-methyl-5-(beta-hydroxyethyl)thiazole monophosphate (THZ-P) and 2-methyl-4-amino-5-hydroxymethyl pyrimidine pyrophosphate (HMP-PP) to form thiamine monophosphate (TMP). The polypeptide is Thiamine-phosphate synthase (Synechocystis sp. (strain ATCC 27184 / PCC 6803 / Kazusa)).